Consider the following 114-residue polypeptide: Superoxide dismutase [Cu-Zn] (114 aa).

Residues His37, His39, and His54 each coordinate Cu cation. Residues 48 to 68 (CMSSGPHFNPRNKEHGAPTDE) form a disordered region. His54, His62, His71, and Asp74 together coordinate Zn(2+). Residues 58 to 68 (RNKEHGAPTDE) show a composition bias toward basic and acidic residues. Residue His111 participates in Cu cation binding.

The protein belongs to the Cu-Zn superoxide dismutase family. In terms of assembly, homodimer. The cofactor is Cu cation. Requires Zn(2+) as cofactor.

It is found in the cytoplasm. It catalyses the reaction 2 superoxide + 2 H(+) = H2O2 + O2. Its function is as follows. Destroys radicals which are normally produced within the cells and which are toxic to biological systems. The sequence is that of Superoxide dismutase [Cu-Zn] from Drosophila miranda (Fruit fly).